A 152-amino-acid polypeptide reads, in one-letter code: MTDLTLIFISLSGNTLSFVRRLSQYLAEKHHIQTKTINIKELHHETFPVMESFVAILPTYLEGGNGIDSGKVEILTNPLGDFIAAHDNVKHCLGIIGSGNKNFNHQYCLTAKQYAKRFGFPMLGDFELRGTNADIERLAQVIVARLTADQQS.

Belongs to the NrdI family.

The sequence is that of Putative NrdI-like protein from Streptococcus pyogenes serotype M18 (strain MGAS8232).